A 63-amino-acid chain; its full sequence is Metallothionein-2 (63 aa).

The interval 1–30 (MDPQDCTCAAGDSCSCAGSCKCKNCRCQSC) is beta. A divalent metal cation is bound by residues C6, C8, C14, C16, C20, C22, C25, C27, C30, C34, C35, C37, C38, C42, C45, C49, C51, C59, C61, and C62. The interval 31 to 63 (RKSCCSCCPASCSNCAKGCVCKEPSSSKCSCCH) is alpha.

This sequence belongs to the metallothionein superfamily. Type 1 family.

In terms of biological role, metallothioneins have a high content of cysteine residues that bind various heavy metals. The polypeptide is Metallothionein-2 (Columba livia (Rock dove)).